A 245-amino-acid chain; its full sequence is 5'-nucleotidase SurE (245 aa).

Asp8, Asp9, Ser39, and Asn91 together coordinate a divalent metal cation.

This sequence belongs to the SurE nucleotidase family. It depends on a divalent metal cation as a cofactor.

Its subcellular location is the cytoplasm. It carries out the reaction a ribonucleoside 5'-phosphate + H2O = a ribonucleoside + phosphate. Nucleotidase that shows phosphatase activity on nucleoside 5'-monophosphates. In Psychromonas ingrahamii (strain DSM 17664 / CCUG 51855 / 37), this protein is 5'-nucleotidase SurE.